The sequence spans 336 residues: MEPRAAVLKLIEHKHLTALEAESFMNHVMKGEVSEILLSSFLTAMRFNGESVEEVLGCTLALRKNALRPKTVFPFDLLDTCGTGGDGQGTINISTLSAIVLASLGIKVAKHGNRSVSSHTGSSDILTRLGYQTETTQEEVEAHLVNRGFTFLFAPMWHPSMKHAGPVRKELGFRTVFNMIGPLSNPFSPQFQIIGVYQPELMELFIKVLQSLGLKRALVCHSRDGLDEFSIFQITDYTFLENGVISRHSFDPKILGLSSLNKEEVYASSSDHAEVLARKVLNSESIAGTHAVALNAGAGLFVMGKIDTIEQGYQIAKEAILSGKTKKYFEDLISKE.

5-phospho-alpha-D-ribose 1-diphosphate-binding positions include Gly-82, 85–86, Thr-90, 92–95, 110–118, and Ser-122; these read GD, NIST, and KHGNRSVSS. Gly-82 is a binding site for anthranilate. Residue Ser-94 participates in Mg(2+) binding. Asn-113 is a binding site for anthranilate. Arg-168 is an anthranilate binding site. Residues Asp-227 and Glu-228 each contribute to the Mg(2+) site.

This sequence belongs to the anthranilate phosphoribosyltransferase family. Homodimer. Mg(2+) serves as cofactor.

It carries out the reaction N-(5-phospho-beta-D-ribosyl)anthranilate + diphosphate = 5-phospho-alpha-D-ribose 1-diphosphate + anthranilate. Its pathway is amino-acid biosynthesis; L-tryptophan biosynthesis; L-tryptophan from chorismate: step 2/5. Functionally, catalyzes the transfer of the phosphoribosyl group of 5-phosphorylribose-1-pyrophosphate (PRPP) to anthranilate to yield N-(5'-phosphoribosyl)-anthranilate (PRA). This Leptospira interrogans serogroup Icterohaemorrhagiae serovar copenhageni (strain Fiocruz L1-130) protein is Anthranilate phosphoribosyltransferase.